The following is a 285-amino-acid chain: Probable E3 ubiquitin-protein ligase IE1 (285 aa).

At 1-201 the chain is on the cytoplasmic side; the sequence is MASKDSDVRC…LPGYWDRDDR (201 aa). The RING-CH-type zinc-finger motif lies at 124–183; that stretch reads SIDEEGKQCWICRDGESLPEARYCNCYGDLQYCHEECLKTWISMSGEKKCKFCQTPYKVN. Zn(2+)-binding residues include Cys-132, Cys-135, Cys-147, Cys-149, His-157, Cys-160, Cys-173, and Cys-176. The chain crosses the membrane as a helical span at residues 202–222; sequence FVFIAGFIGMGTILAGWIASF. The Extracellular portion of the chain corresponds to 223–238; sequence FYLLVVLCGKYFTYKD. Residues 239-259 traverse the membrane as a helical segment; sequence VMIVVGGLAIIQVVGLMFSLF. The Cytoplasmic segment spans residues 260 to 285; sequence MYFQIGNLLRQYINYMTETNIDPLRT.

Its subcellular location is the membrane. It carries out the reaction S-ubiquitinyl-[E2 ubiquitin-conjugating enzyme]-L-cysteine + [acceptor protein]-L-lysine = [E2 ubiquitin-conjugating enzyme]-L-cysteine + N(6)-ubiquitinyl-[acceptor protein]-L-lysine.. Its pathway is protein modification; protein ubiquitination. Controls the expression of later classes of genes and also of the IE genes (Potential). E3 ubiquitin-protein ligase. E3 ubiquitin ligases accept ubiquitin from an E2 ubiquitin-conjugating enzyme in the form of a thioester and then directly transfer the ubiquitin to targeted substrates. The sequence is that of Probable E3 ubiquitin-protein ligase IE1 (IE1) from Bovine herpesvirus 4 (strain DN-599) (BoHV-4).